Consider the following 1291-residue polypeptide: MPVTINNFNYNDPIDNNNIIMMEPPFARGTGRYYKAFKITDRIWIIPERYTFGYKPEDFNKSSGIFNRDVCEYYDPDYLNTNDKKNIFLQTMIKLFNRIKSKPLGEKLLEMIINGIPYLGDRRVPLEEFNTNIASVTVNKLISNPGEVERKKGIFANLIIFGPGPVLNENETIDIGIQNHFASREGFGGIMQMKFCPEYVSVFNNVQENKGASIFNRRGYFSDPALILMHELIHVLHGLYGIKVDDLPIVPNEKKFFMQSTDAIQAEELYTFGGQDPSIITPSTDKSIYDKVLQNFRGIVDRLNKVLVCISDPNININIYKNKFKDKYKFVEDSEGKYSIDVESFDKLYKSLMFGFTETNIAENYKIKTRASYFSDSLPPVKIKNLLDNEIYTIEEGFNISDKDMEKEYRGQNKAINKQAYEEISKEHLAVYKIQMCKSVKAPGICIDVDNEDLFFIADKNSFSDDLSKNERIEYNTQSNYIENDFPINELILDTDLISKIELPSENTESLTDFNVDVPVYEKQPAIKKIFTDENTIFQYLYSQTFPLDIRDISLTSSFDDALLFSNKVYSFFSMDYIKTANKVVEAGLFAGWVKQIVNDFVIEANKSNTMDKIADISLIVPYIGLALNVGNETAKGNFENAFEIAGASILLEFIPELLIPVVGAFLLESYIDNKNKIIKTIDNALTKRNEKWSDMYGLIVAQWLSTVNTQFYTIKEGMYKALNYQAQALEEIIKYRYNIYSEKEKSNINIDFNDINSKLNEGINQAIDNINNFINGCSVSYLMKKMIPLAVEKLLDFDNTLKKNLLNYIDENKLYLIGSAEYEKSKVNKYLKTIMPFDLSIYTNDTILIEMFNKYNSEILNNIILNLRYKDNNLIDLSGYGAKVEVYDGVELNDKNQFKLTSSANSKIRVTQNQNIIFNSVFLDFSVSFWIRIPKYKNDGIQNYIHNEYTIINCMKNNSGWKISIRGNRIIWTLIDINGKTKSVFFEYNIREDISEYINRWFFVTITNNLNNAKIYINGKLESNTDIKDIREVIANGEIIFKLDGDIDRTQFIWMKYFSIFNTELSQSNIEERYKIQSYSEYLKDFWGNPLMYNKEYYMFNAGNKNSYIKLKKDSPVGEILTRSKYNQNSKYINYRDLYIGEKFIIRRKSNSQSINDDIVRKEDYIYLDFFNLNQEWRVYTYKYFKKEEEKLFLAPISDSDEFYNTIQIKEYDEQPTYSCQLLFKKDEESTDEIGLIGIHRFYESGIVFEEYKDYFCISKWYLKEVKRKPYNLKLGCNWQFIPKDEGWTE.

Position 230 (His-230) interacts with Zn(2+). Glu-231 is an active-site residue. Zn(2+) is bound by residues His-234 and Glu-268. Cys-437 and Cys-446 form a disulfide bridge. The translocation domain (TD) stretch occupies residues 442-857 (APGICIDVDN…ILIEMFNKYN (416 aa)). Residues 481–532 (YIENDFPINELILDTDLISKIELPSENTESLTDFNVDVPVYEKQPAIKKIFT) are belt. Residues 858-1079 (SEILNNIILN…NIEERYKIQS (222 aa)) form an N-terminus of receptor binding domain (N-RBD) region. The C-terminus of receptor binding domain (C-RBD) stretch occupies residues 1080-1291 (YSEYLKDFWG…FIPKDEGWTE (212 aa)). The Host ganglioside-binding motif signature appears at 1260–1263 (SKWY).

The protein belongs to the peptidase M27 family. Heterodimer; disulfide-linked heterodimer of a light chain (LC) and a heavy chain (HC). Interacts with host synaptic vesicle proteins synaptotagmin-1 and -2 which serve as coreceptors with complex gangliosides. Zn(2+) serves as cofactor.

The protein localises to the secreted. It localises to the host synapse. Its subcellular location is the host presynaptic cell membrane. It is found in the host cytoplasm. The protein resides in the host cytosol. The protein localises to the host cytoplasmic vesicle. It localises to the host secretory vesicle. Its subcellular location is the host synaptic vesicle membrane. The catalysed reaction is Limited hydrolysis of proteins of the neuroexocytosis apparatus, synaptobrevins, SNAP25 or syntaxin. No detected action on small molecule substrates.. Botulinum toxin causes flaccid paralysis by inhibiting neurotransmitter (acetylcholine) release from the presynaptic membranes of nerve terminals of eukaryotic host skeletal and autonomic nervous system, with frequent heart or respiratory failure. Precursor of botulinum neurotoxin B which has 2 coreceptors; complex polysialylated gangliosides found on neural tissue and specific membrane-anchored proteins found in synaptic vesicles. Receptor proteins are exposed on host presynaptic cell membrane during neurotransmitter release, when the toxin heavy chain (HC) binds to them. Upon synaptic vesicle recycling the toxin is taken up via the endocytic pathway. When the pH of the toxin-containing endosome drops a structural rearrangement occurs so that the N-terminus of the HC forms pores that allows the light chain (LC) to translocate into the cytosol. Once in the cytosol the disulfide bond linking the 2 subunits is reduced and LC cleaves its target protein on synaptic vesicles, preventing their fusion with the cytoplasmic membrane and thus neurotransmitter release. Functionally, has proteolytic activity. After translocation into the eukaryotic host cytosol, LC hydrolyzes the '76-Gln-|-Phe-77' bond in synaptobrevin-2/VAMP2, blocking neurotransmitter release. In terms of biological role, responsible for host epithelial cell transcytosis, host nerve cell targeting and translocation of light chain (LC) into host cytosol. Composed of 3 subdomains; the translocation domain (TD), and N-terminus and C-terminus of the receptor-binding domain (RBD). The RBD is responsible for the adherence of the toxin to the cell surface. It simultaneously recognizes 2 coreceptors; polysialated gangliosides and host synaptotagmin-1 and -2 (SYT1 and SYT2) which bind simultaneously to adjacent but separate sites at the tip of the HC. The N-terminus of the TD wraps an extended belt around the perimeter of the LC, protecting Zn(2+) in the active site; it may also prevent premature LC dissociation from the translocation channel and protect toxin prior to translocation. The TD inserts into synaptic vesicle membrane to allow translocation into the host cytosol. This chain is Botulinum neurotoxin type B (botB), found in Clostridium botulinum (strain Okra / Type B1).